We begin with the raw amino-acid sequence, 448 residues long: Putative vacuolar cation/proton exchanger 6 (448 aa).

Residues 31–81 are Cytoplasmic-facing; the sequence is MGLVNEVELKSLLEQETDSPQTNAASLMEQGSLRERRAKAPRNSVVQSFKI. A helical membrane pass occupies residues 82–102; it reads VILSNKLNLLLPFGPLAILVH. Residues 103–109 are Extracellular-facing; the sequence is YLTDNKG. A helical membrane pass occupies residues 110 to 130; it reads WFFLLSLVGITPLAERLGYAT. At 131–141 the chain is on the cytoplasmic side; sequence EQLSCYTGATV. The helical transmembrane segment at 142–162 threads the bilayer; sequence GGLLNATFGNVIELIISIIAL. Residues 150–185 are cation selection; the sequence is GNVIELIISIIALKNGMIRVVQLTLLGSILSNILLV. Residues 163-178 lie on the Extracellular side of the membrane; it reads KNGMIRVVQLTLLGSI. The chain crosses the membrane as a helical span at residues 179-199; that stretch reads LSNILLVLGCAFFCGGLVFPG. The Cytoplasmic segment spans residues 200 to 209; the sequence is KDQVFDKRNA. The helical transmembrane segment at 210 to 230 threads the bilayer; it reads VVSSGMLLMAVMGLLFPTFLH. The Extracellular segment spans residues 231–243; it reads YTHSEVHAGSSEL. Residues 244-264 form a helical membrane-spanning segment; that stretch reads ALSRFISCIMLVAYAAYLFFQ. At 265 to 295 the chain is on the cytoplasmic side; it reads LKSQPSFYTEKTNQNEETSNDDEDPEISKWE. The chain crosses the membrane as a helical span at residues 296 to 316; it reads AIIWLSIFTAWVSLLSGYLVD. Residues 317–334 are Extracellular-facing; that stretch reads AIEGTSVSWKIPISFISV. A helical membrane pass occupies residues 335–355; sequence ILLPIVGNAAEHAGAIMFAMK. Residues 341-376 form a cation selection region; that stretch reads GNAAEHAGAIMFAMKDKLDLSLGVAIGSSIQISMFA. The Cytoplasmic segment spans residues 356–363; sequence DKLDLSLG. A helical transmembrane segment spans residues 364–384; sequence VAIGSSIQISMFAVPFCVVIG. Residues 385–393 lie on the Extracellular side of the membrane; sequence WMMGAQMDL. A helical membrane pass occupies residues 394 to 414; it reads NLQLFETATLLITVIVVAFFL. The Cytoplasmic portion of the chain corresponds to 415–425; sequence QLEGTSNYFKR. A helical transmembrane segment spans residues 426 to 446; that stretch reads LMLILCYLIVAASFFVHEDPH. Residues 447–448 are Extracellular-facing; it reads QG.

The protein belongs to the Ca(2+):cation antiporter (CaCA) (TC 2.A.19) family. Cation/proton exchanger (CAX) subfamily.

It is found in the vacuole membrane. Its function is as follows. Vacuolar cation/proton exchanger (CAX). Translocates Ca(2+) and other metal ions into vacuoles using the proton gradient formed by H(+)-ATPase and H(+)-pyrophosphatase. This Arabidopsis thaliana (Mouse-ear cress) protein is Putative vacuolar cation/proton exchanger 6 (CAX6).